A 97-amino-acid polypeptide reads, in one-letter code: Co-chaperonin GroES (97 aa).

This sequence belongs to the GroES chaperonin family. In terms of assembly, heptamer of 7 subunits arranged in a ring. Interacts with the chaperonin GroEL.

The protein localises to the cytoplasm. In terms of biological role, together with the chaperonin GroEL, plays an essential role in assisting protein folding. The GroEL-GroES system forms a nano-cage that allows encapsulation of the non-native substrate proteins and provides a physical environment optimized to promote and accelerate protein folding. GroES binds to the apical surface of the GroEL ring, thereby capping the opening of the GroEL channel. This is Co-chaperonin GroES from Pectobacterium carotovorum subsp. carotovorum (strain PC1).